We begin with the raw amino-acid sequence, 152 residues long: Endoribonuclease YbeY (152 aa).

Zn(2+) is bound by residues His113, His117, and His123.

It belongs to the endoribonuclease YbeY family. The cofactor is Zn(2+).

It localises to the cytoplasm. In terms of biological role, single strand-specific metallo-endoribonuclease involved in late-stage 70S ribosome quality control and in maturation of the 3' terminus of the 16S rRNA. The chain is Endoribonuclease YbeY from Pseudoalteromonas atlantica (strain T6c / ATCC BAA-1087).